A 228-amino-acid chain; its full sequence is Somatolactin (228 aa).

A signal peptide spans 1-24 (MFSIRMNKVLQGFVCLMLTHRIVG). 3 disulfide bridges follow: C29–C38, C88–C200, and C217–C225. 2 N-linked (GlcNAc...) asparagine glycosylation sites follow: N141 and N177.

This sequence belongs to the somatotropin/prolactin family.

The protein localises to the secreted. The protein is Somatolactin of Anguilla anguilla (European freshwater eel).